The sequence spans 822 residues: Sodium/hydrogen exchanger 1 (822 aa).

Residues 1 to 102 (MMLRWSGIWG…FPVLDIDYLH (102 aa)) lie on the Extracellular side of the membrane. A disordered region spans residues 41-73 (SPTANTIRGAEPPRERSIGDVTTAPSEPVHHPD). Residues 103 to 125 (VRTPFEISLWILLACLMKIGFHV) form a helical membrane-spanning segment. Over 126-134 (IPTISSIVP) the chain is Cytoplasmic. The helical transmembrane segment at 135-152 (ESCLLIVVGLLVGGLIKG) threads the bilayer. Residues 153-162 (VGETPPFLQS) are Extracellular-facing. The helical transmembrane segment at 163–180 (DVFFLFLLPPIILDAGYF) threads the bilayer. Residues 181-190 (LPLRQFTENL) lie on the Cytoplasmic side of the membrane. A helical transmembrane segment spans residues 191 to 219 (GTILIFAVVGTLWNAFFLGGLLYAVCLVG). Over 220-226 (GEQINNI) the chain is Extracellular. Residues 227 to 253 (GLLDTLLFGSIISAVDPVAVVAVFEEI) form a helical membrane-spanning segment. The Cytoplasmic portion of the chain corresponds to 254–256 (HIN). Residues 257–287 (ELLHILVFGESLLNDAVTVVLYHLFEEFANY) traverse the membrane as a helical segment. Residues 288 to 291 (DSIG) are Extracellular-facing. A helical transmembrane segment spans residues 292 to 326 (ISDIFLGFLSFFVVALGGVFVGVVYGVIAAFTSRF). The Cytoplasmic portion of the chain corresponds to 327–332 (TSHIRV). The chain crosses the membrane as a helical span at residues 333–345 (IEPLFVFLYSYMA). Over 346–354 (YLSAELFHL) the chain is Extracellular. The helical transmembrane segment at 355 to 375 (SGIMALIASGVVMRPYVEANI) threads the bilayer. Residues 376 to 377 (SH) lie on the Cytoplasmic side of the membrane. Residues 378–408 (KSHTTIKYFLKMWSSVSETLIFIFLGVSTVA) form a helical membrane-spanning segment. At 409–414 (GSHQWN) the chain is on the extracellular side. A helical membrane pass occupies residues 415 to 442 (WTFVISTLLFCLIARVLGVLVLTWFINK). Residues 443–448 (FRIVKL) are Cytoplasmic-facing. A helical membrane pass occupies residues 449–473 (TPKDQFIIAYGGLRGAIAFSLGYLM). The Extracellular segment spans residues 474–479 (DKKHFP). Residues 480–509 (MCDLFLTAIITVIFFTVFVQGMTIRPLVDL) traverse the membrane as a helical segment. Residues 507–549 (VDLLAVKKKQETKRSINEEIHTQFLDHLLTGIEDICGHYGHHH) form an interaction with TESC region. Residues 510–822 (LAVKKKQETK…EGEPFIPKGE (313 aa)) lie on the Cytoplasmic side of the membrane. A PI(4,5)P2-binding region region spans residues 513-520 (KKKQETKR). Residues 519-549 (KRSINEEIHTQFLDHLLTGIEDICGHYGHHH) form an interaction with CHP2 region. Positions 544 to 549 (HYGHHH) are confers pH-dependent PI(4,5)P2 binding. Positions 556–564 (RFNKKYVKK) are PI(4,5)P2-binding region. Phosphoserine is present on residues Ser-603 and Ser-606. Thr-607 carries the post-translational modification Phosphothreonine. 2 positions are modified to phosphoserine: Ser-609 and Ser-652. Residues 637 to 822 (KILRSNLQKT…EGEPFIPKGE (186 aa)) form an interaction with TESC region. The segment at 637 to 822 (KILRSNLQKT…EGEPFIPKGE (186 aa)) is interaction with CALM1. An interaction with PPP3CA region spans residues 688-691 (LTVP). Phosphoserine occurs at positions 697, 701, and 707. The tract at residues 719-724 (PVITID) is interaction with PPP3CA. Ser-727, Ser-730, and Ser-733 each carry phosphoserine. The tract at residues 752–822 (PTRLTRGEED…EGEPFIPKGE (71 aa)) is disordered. Phosphothreonine is present on Thr-756. A compositionally biased stretch (acidic residues) spans 759 to 768 (EEDEDEDEDG). Thr-786 carries the phosphothreonine modification. Phosphoserine is present on residues Ser-792, Ser-794, and Ser-803.

This sequence belongs to the monovalent cation:proton antiporter 1 (CPA1) transporter (TC 2.A.36) family. As to quaternary structure, homodimer; dimerization is crucial for its function. Oligomer. Interacts with CALM in a calcium-dependent manner. Interacts with TESC. Interacts (via the juxtamembrane region of the cytoplasmic C-terminal domain) with CHP1; the interaction occurs at the plasma membrane in a calcium-dependent manner. Interacts with CHP2; the interaction occurs in a calcium-dependent manner. Interacts with EZR; regulates the cytoskeletal interactions of SLC9A1 and promotes stress fiber formation. Post-translationally, ubiquitinated, leading to its degradation by the proteasome. Ubiquitination is reduced by CHP1. O-glycosylated. In terms of processing, palmitoylated; may play a major role in SLC9A1 regulation. Post-translationally, phosphorylation at Thr-786 increases SLC9A1 activity. Specifically dephosphorylated at Thr-786 by PPP3CA that negatively regulates SLC9A1 activity. Phosphorylation at Ser-652 by AKT1 reduces SLC9A1 binding to CALM1.

It localises to the cell membrane. The protein localises to the basolateral cell membrane. The enzyme catalyses Na(+)(in) + H(+)(out) = Na(+)(out) + H(+)(in). The catalysed reaction is Li(+)(out) + H(+)(in) = Li(+)(in) + H(+)(out). It carries out the reaction Li(+)(in) + Na(+)(out) = Li(+)(out) + Na(+)(in). Activated at acidic pHs. Inhibited by amiloride and 5-amino-substituted derivatives. Inhibited by cariporide and eniporide. Phosphatidylinositol 4,5-bisphosphate (PI(4,5)P2) and phosphatidylinositol 3,4,5-trisphosphate (PI(3,4,5)P3) bind and differentially regulate SLC9A1 activity. Its function is as follows. Electroneutral Na(+) /H(+) antiporter that extrudes Na(+) in exchange for external protons driven by the inward sodium ion chemical gradient, protecting cells from acidification that occurs from metabolism. Exchanges intracellular H(+) ions for extracellular Na(+) in 1:1 stoichiometry. Plays a key role in maintening intracellular pH neutral and cell volume, and thus is important for cell growth, proliferation, migration and survival. In addition, can transport lithium Li(+) and also functions as a Na(+)/Li(+) antiporter. SLC9A1 also functions in membrane anchoring and organization of scaffolding complexes that coordinate signaling inputs. The polypeptide is Sodium/hydrogen exchanger 1 (SLC9A1) (Cricetulus griseus (Chinese hamster)).